The primary structure comprises 266 residues: Ribosomal RNA small subunit methyltransferase J (266 aa).

Residues 109–110, 125–126, and Asp-185 each bind S-adenosyl-L-methionine; these read RD and ER.

Belongs to the methyltransferase superfamily. RsmJ family.

It is found in the cytoplasm. It catalyses the reaction guanosine(1516) in 16S rRNA + S-adenosyl-L-methionine = N(2)-methylguanosine(1516) in 16S rRNA + S-adenosyl-L-homocysteine + H(+). Its function is as follows. Specifically methylates the guanosine in position 1516 of 16S rRNA. The polypeptide is Ribosomal RNA small subunit methyltransferase J (Cellvibrio japonicus (strain Ueda107) (Pseudomonas fluorescens subsp. cellulosa)).